The chain runs to 149 residues: 3-dehydroquinate dehydratase (149 aa).

The active-site Proton acceptor is the Tyr-23. Residues Asn-75, His-81, and Asp-88 each contribute to the substrate site. His-101 serves as the catalytic Proton donor. Substrate is bound by residues 102–103 (LS) and Arg-112.

The protein belongs to the type-II 3-dehydroquinase family. Homododecamer.

The catalysed reaction is 3-dehydroquinate = 3-dehydroshikimate + H2O. Its pathway is metabolic intermediate biosynthesis; chorismate biosynthesis; chorismate from D-erythrose 4-phosphate and phosphoenolpyruvate: step 3/7. Functionally, catalyzes a trans-dehydration via an enolate intermediate. This chain is 3-dehydroquinate dehydratase, found in Stenotrophomonas maltophilia (strain R551-3).